The chain runs to 298 residues: 4-diphosphocytidyl-2-C-methyl-D-erythritol kinase (298 aa).

Lys15 is an active-site residue. Residue Pro100–Ala110 coordinates ATP. Asp142 is an active-site residue.

Belongs to the GHMP kinase family. IspE subfamily.

The enzyme catalyses 4-CDP-2-C-methyl-D-erythritol + ATP = 4-CDP-2-C-methyl-D-erythritol 2-phosphate + ADP + H(+). Its pathway is isoprenoid biosynthesis; isopentenyl diphosphate biosynthesis via DXP pathway; isopentenyl diphosphate from 1-deoxy-D-xylulose 5-phosphate: step 3/6. Functionally, catalyzes the phosphorylation of the position 2 hydroxy group of 4-diphosphocytidyl-2C-methyl-D-erythritol. This chain is 4-diphosphocytidyl-2-C-methyl-D-erythritol kinase, found in Rhodopseudomonas palustris (strain BisA53).